The primary structure comprises 537 residues: Small conductance calcium-activated potassium channel protein 1 (537 aa).

Over residues 1-10 (MSSHSHNGSV) the composition is skewed to polar residues. A disordered region spans residues 1–90 (MSSHSHNGSV…GKPPTVSHRL (90 aa)). Residues 65–76 (QEEEEEEEEEED) are compositionally biased toward acidic residues. Residues 108-128 (LIFGMFGIVVMVTETELSWGV) form a helical membrane-spanning segment. A helical membrane pass occupies residues 137–157 (FALKCLISLSTVILLGLVILY). The chain crosses the membrane as a helical span at residues 176-196 (IAMTWERVSLISLELVVCAIH). A helical transmembrane segment spans residues 225–245 (VLLSIPMFLRLYLLARVMLLH). The helical transmembrane segment at 274-294 (LMTICPGTVLLVFSVSSWIVA) threads the bilayer. The pore-forming intramembrane region spans 314–334 (FLGAMWLISITFLSIGYGDMV). Residues 343–363 (VCLLTGIMGAGCTALVVAVVA) form a segment S6 region. The tract at residues 381–460 (DTQLTKRVKN…LAELAKAQSI (80 aa)) is calmodulin-binding.

Belongs to the potassium channel KCNN family. KCa2.1/KCNN1 subfamily. In terms of assembly, homodimer. Heteromultimer with KCNN2 and KCNN3. The complex is composed of 4 channel subunits each of which binds to a calmodulin subunit which regulates the channel activity through calcium-binding. Interacts with calmodulin. As to expression, highest expression in brain and liver with lower levels in heart, testis, kidney and colon. In colon, detected in smooth muscle cells. Expressed in atrial and ventricular myocytes with higher levels in atrial myocytes.

Its subcellular location is the membrane. The protein resides in the cytoplasm. It is found in the myofibril. It localises to the sarcomere. The protein localises to the z line. The catalysed reaction is K(+)(in) = K(+)(out). With respect to regulation, inhibited by bee venom neurotoxin apamin. Inhibited by d-tubocurarine and tetraethylammonium (TEA). Its function is as follows. Small conductance calcium-activated potassium channel that mediates the voltage-independent transmembrane transfer of potassium across the cell membrane through a constitutive interaction with calmodulin which binds the intracellular calcium allowing its opening. The current is characterized by a voltage-independent activation, an intracellular calcium concentration increase-dependent activation and a single-channel conductance of about 3 picosiemens. Also presents an inwardly rectifying current, thus reducing its already small outward conductance of potassium ions, which is particularly the case when the membrane potential displays positive values, above + 20 mV. Activation is followed by membrane hyperpolarization. Thought to regulate neuronal excitability by contributing to the slow component of synaptic afterhyperpolarization. The sequence is that of Small conductance calcium-activated potassium channel protein 1 from Mus musculus (Mouse).